The chain runs to 106 residues: Circadian clock oscillator protein KaiB (106 aa).

The protein belongs to the KaiB family. In terms of assembly, the KaiABC complex composition changes during the circadian cycle to control KaiC phosphorylation. Complexes KaiC(6), KaiA(2-4):KaiC(6), KaiB(6):KaiC(6) and KaiC(6):KaiB(6):KaiA(12) are among the most important forms, many form cooperatively. Undergoes a major conformational rearrangment; in the free state forms homotetramers as a dimer of dimers. When bound to the CI domain of KaiC switches to a monomeric thioredoxin-fold (KaiB(fs)). KaiB(fs) binds CikA, leading it to dephosphorylate phospho-RpaA.

Its function is as follows. Key component of the KaiABC oscillator complex, which constitutes the main circadian regulator in cyanobacteria. Complex composition changes during the circadian cycle to control KaiC phosphorylation. KaiA stimulates KaiC autophosphorylation, while KaiB sequesters KaiA, leading to KaiC autodephosphorylation. Phospho-Ser-431 KaiC accumulation triggers binding of KaiB to form the KaiB(6):KaiC(6) complex, leading to changes in output regulators CikA and SasA. KaiB switches to a thioredoxin-like fold (KaiB(fs)) when bound to KaiC. KaiB(6):KaiC(6) formation exposes a site for KaiA binding that sequesters KaiA from KaiC, making the KaiC(6):KaiB(6):KaiA(12) complex that results in KaiC autodephosphorylation. Functionally, a metamorphic protein which reversibly switches between an inactive tetrameric fold and a rare, thioredoxin-like monomeric fold (KaiB(fs)). KaiB(fs) binds phospho-KaiC, KaiA and CikA. KaiA and CikA compete for binding to KaiB(fs), and KaiB(fs) and SasA compete for binding to KaiC, thus the clock oscillator and output signal pathway are tightly coupled. The chain is Circadian clock oscillator protein KaiB from Gloeothece citriformis (strain PCC 7424) (Cyanothece sp. (strain PCC 7424)).